The sequence spans 866 residues: MQEKYHPQEIESEAQQYWQQTAAFKAVEAPEKRKYYCLSMFPYPSGKLHMGHVRNYTIGDVLSRYHRMQGYNVLQPMGWDAFGLPAENAAMQNNVPPAKWTYDNIAYMRKQLQSLGLAMDWDRELATCQPDYYRWNQWLFLRMLEKGLAYRTTGIVNWDPVDQTVLANEQVIDGRGWRTGALVEKHEIPMYYMKITAYADELLEALNALPGWPERVRTMQANWIGKSFGVEVRFPADAESGMPQDLKVFTTRADTLFGVTYVAVAAEHPVAQHAAKSNPALAAFIEECRQGAMMEAELATQEKKGRDTGLYVIHPLTGARLPVWIANYVLMGYGEGAVMAVPAHDERDFEFATQYSLPIRAVIKPVDSGLTVPLAQAYVEHGITFDSGEFSGLAFQPAVDAIAVALQQKGLGEKRVHYRLRDWGISRQRYWGCPIPLIYCDACGVVPVPDEQLPVVLPEDLVPDGSGNPLAKTPSFYECSCPRCGQSARRETDTMDTFVDSSWYYIRYACTDQHRAMVDARVDYWLPVDQYIGGIEHAILHLLYSRFWSKVMRDLGLVLFDEPFANLLTQGMVLNEIMFRKTGSGRIVYFNPADVDIQTDEQGRRIGAVLRADGQPVEAGGIGTMSKSRNNGVDPQKLVEQYGADTARLFMMFASPPEQTLEWADAGVEGAFRFLKRLWKQVYDHLQQSGVANGPIPVAGLGPELKALRFQLHQTIAKVGDDLGRRHTFNTAIAAVMELMNALGKLQDSSPSARGLMQEALENIVLLLSPIVPHICHVLWRELRPGTELLDQPWPQADVAALVQDEIELIVQVNGKLRGKIRVAADTKPVIVEQLALENEQVRRFIDGKAVKKVVMVPGKLVNIVI.

Positions proline 42 to histidine 52 match the 'HIGH' region motif. A 'KMSKS' region motif is present at residues threonine 624–serine 628. Lysine 627 lines the ATP pocket.

Belongs to the class-I aminoacyl-tRNA synthetase family.

The protein resides in the cytoplasm. The catalysed reaction is tRNA(Leu) + L-leucine + ATP = L-leucyl-tRNA(Leu) + AMP + diphosphate. The chain is Leucine--tRNA ligase from Nitrosospira multiformis (strain ATCC 25196 / NCIMB 11849 / C 71).